The sequence spans 158 residues: uncharacterized protein (158 aa).

A compositionally biased stretch (polar residues) spans 1-21 (MPHTGSQHTLQATPKTAQHTG). Disordered regions lie at residues 1–89 (MPHT…RVEG) and 107–158 (EEEK…DAKT). Composition is skewed to basic and acidic residues over residues 51-68 (HTEG…DKAG) and 107-127 (EEEK…RESR). Residues 128-137 (QGTAHKSTCM) are compositionally biased toward polar residues. Residues 149-158 (EIGKVEDAKT) show a composition bias toward basic and acidic residues.

This is an uncharacterized protein from Encephalitozoon cuniculi (strain GB-M1) (Microsporidian parasite).